A 106-amino-acid polypeptide reads, in one-letter code: MARKIRKGDTVMVLSGKDKGKTGEVVRVIPKEDKVVVRGVNVVKRHQRPNAQMRQGGIIEKESPIYACKVALVCPSCGKATRVGFRFLEDGTKVRYCKKCGEVIDK.

Belongs to the universal ribosomal protein uL24 family. Part of the 50S ribosomal subunit.

Functionally, one of two assembly initiator proteins, it binds directly to the 5'-end of the 23S rRNA, where it nucleates assembly of the 50S subunit. One of the proteins that surrounds the polypeptide exit tunnel on the outside of the subunit. This chain is Large ribosomal subunit protein uL24, found in Thermosipho africanus (strain TCF52B).